The chain runs to 86 residues: Large ribosomal subunit protein bL27 (86 aa).

Residues 1–10 (MAQKKGGGST) show a composition bias toward gly residues. A disordered region spans residues 1-22 (MAQKKGGGSTRNGRDSESKRLG).

This sequence belongs to the bacterial ribosomal protein bL27 family.

The protein is Large ribosomal subunit protein bL27 of Polynucleobacter asymbioticus (strain DSM 18221 / CIP 109841 / QLW-P1DMWA-1) (Polynucleobacter necessarius subsp. asymbioticus).